Reading from the N-terminus, the 236-residue chain is tRNA (guanine-N(7)-)-methyltransferase (236 aa).

Aspartate 35, glutamate 60, asparagine 87, and aspartate 113 together coordinate S-adenosyl-L-methionine. Residue aspartate 113 is part of the active site. 2 residues coordinate substrate: lysine 117 and aspartate 149.

Belongs to the class I-like SAM-binding methyltransferase superfamily. TrmB family.

It catalyses the reaction guanosine(46) in tRNA + S-adenosyl-L-methionine = N(7)-methylguanosine(46) in tRNA + S-adenosyl-L-homocysteine. It functions in the pathway tRNA modification; N(7)-methylguanine-tRNA biosynthesis. In terms of biological role, catalyzes the formation of N(7)-methylguanine at position 46 (m7G46) in tRNA. This chain is tRNA (guanine-N(7)-)-methyltransferase, found in Parasynechococcus marenigrum (strain WH8102).